A 1575-amino-acid polypeptide reads, in one-letter code: MAAAALLLGLALLAPRAAGAGMGACYDGAGRPQRCLPVFENAAFGRLAQASHTCGSPPEDFCPHVGAAGAGAHCQRCDAADPQRHHNASYLTDFHSQDESTWWQSPSMAFGVQYPTSVNITLRLGKAYEITYVRLKFHTSRPESFAIYKRSRADGPWEPYQFYSASCQKTYGRPEGQYLRPGEDERVAFCTSEFSDISPLSGGNVAFSTLEGRPSAYNFEESPGLQEWVTSTELLISLDRLNTFGDDIFKDPKVLQSYYYAVSDFSVGGRCKCNGHASECGPDVAGQLACRCQHNTTGTDCERCLPFFQDRPWARGTAEAAHECLPCNCSGRSEECTFDRELFRSTGHGGRCHHCRDHTAGPHCERCQENFYHWDPRMPCQPCDCQSAGSLHLQCDDTGTCACKPTVTGWKCDRCLPGFHSLSEGGCRPCTCNPAGSLDTCDPRSGRCPCKENVEGNLCDRCRPGTFNLQPHNPAGCSSCFCYGHSKVCASTAQFQVHHILSDFHQGAEGWWARSVGGSEHPPQWSPNGVLLSPEDEEELTAPEKFLGDQRFSYGQPLILTFRVPPGDSPLPVQLRLEGTGLALSLRHSSLSGPQDAGHPREVELRFHLQETSEDVAPPLPPFHFQRLLANLTSLRLRVSPGPSPAGPVFLTEVRLTSARPGLSPPASWVEICSCPTGYTGQFCESCAPGYKREMPQGGPYASCVPCTCNQHGTCDPNTGICVCSHHTEGPSCERCLPGFYGNPFAGQADDCQPCPCPGQSACTTIPESREVVCTHCPPGQRGRRCEVCDDGFFGDPLGLFGHPQPCHQCQCSGNVDPNAVGNCDPLSGHCLRCLHNTTGDHCEHCQEGFYGSALAPRPADKCMPCSCHPQGSVSEQMPCDPVTGQCSCLPHVTARDCSRCYPGFFDLQPGRGCRSCKCHPLGSQEDQCHPKTGQCTCRPGVTGQACDRCQLGFFGFSIKGCRACRCSPLGAASAQCHENGTCVCRPGFEGYKCDRCHDNFFLTADGTHCQQCPSCYALVKEEAAKLKARLTLTEGWLQGSDCGSPWGPLDILLGEAPRGDVYQGHHLLPGAREAFLEQMMSLEGAVKAAREQLQRLNKGARCAQAGSQKTCTQLADLEAVLESSEEEILHAAAILASLEIPQEGPSQPTKWSHLATEARALARSHRDTATKIAATAWRALLASNTSYALLWNLLEGRVALETQRDLEDRYQEVQAAQKALRTAVAEVLPEAESVLATVQQVGADTAPYLALLASPGALPQKSRAEDLGLKAKALEKTVASWQHMATEAARTLQTAAQATLRQTEPLTKLHQEARAALTQASSSVQAATVTVMGARTLLADLEGMKLQFPRPKDQAALQRKADSVSDRLLADTRKKTKQAERMLGNAAPLSSSAKKKGREAEVLAKDSAKLAKALLRERKQAHRRASRLTSQTQATLQQASQQVLASEARRQELEEAERVGAGLSEMEQQIRESRISLEKDIETLSELLARLGSLDTHQAPAQALNETQWALERLRLQLGSPGSLQRKLSLLEQESQQQELQIQGFESDLAEIRADKQNLEAILHSLPENCASWQ.

Residues 1 to 19 (MAAAALLLGLALLAPRAAG) form the signal peptide. Residues 31 to 270 (RPQRCLPVFE…AVSDFSVGGR (240 aa)) enclose the Laminin N-terminal domain. Asparagine 87 and asparagine 119 each carry an N-linked (GlcNAc...) asparagine glycan. Disulfide bonds link cysteine 271–cysteine 280, cysteine 273–cysteine 290, cysteine 292–cysteine 301, cysteine 304–cysteine 324, cysteine 327–cysteine 336, cysteine 329–cysteine 352, cysteine 355–cysteine 364, cysteine 367–cysteine 380, cysteine 383–cysteine 395, cysteine 385–cysteine 401, cysteine 403–cysteine 412, cysteine 415–cysteine 427, cysteine 430–cysteine 441, cysteine 432–cysteine 448, cysteine 450–cysteine 459, and cysteine 462–cysteine 477. 4 consecutive Laminin EGF-like domains span residues 271 to 326 (CKCN…ECLP), 327 to 382 (CNCS…PCQP), 383 to 429 (CDCQ…GCRP), and 430 to 479 (CTCN…GCSS). A glycan (N-linked (GlcNAc...) asparagine) is linked at asparagine 295. Residue asparagine 328 is glycosylated (N-linked (GlcNAc...) asparagine). The Laminin EGF-like 5; first part domain maps to 480-489 (CFCYGHSKVC). Residues 499 to 672 (HILSDFHQGA…LSPPASWVEI (174 aa)) enclose the Laminin IV type A domain. A glycan (N-linked (GlcNAc...) asparagine) is linked at asparagine 631. The region spanning 673 to 706 (CSCPTGYTGQFCESCAPGYKREMPQGGPYASCVP) is the Laminin EGF-like 5; second part domain. Cystine bridges form between cysteine 707-cysteine 715, cysteine 709-cysteine 722, cysteine 724-cysteine 733, cysteine 736-cysteine 752, cysteine 755-cysteine 763, cysteine 757-cysteine 774, cysteine 777-cysteine 786, cysteine 789-cysteine 807, cysteine 810-cysteine 824, cysteine 812-cysteine 831, cysteine 834-cysteine 843, cysteine 846-cysteine 863, cysteine 866-cysteine 880, cysteine 868-cysteine 887, cysteine 889-cysteine 898, cysteine 901-cysteine 914, cysteine 917-cysteine 929, cysteine 919-cysteine 936, cysteine 938-cysteine 947, cysteine 950-cysteine 962, cysteine 965-cysteine 977, cysteine 967-cysteine 983, cysteine 985-cysteine 994, and cysteine 997-cysteine 1010. 6 consecutive Laminin EGF-like domains span residues 707–754 (CTCN…DCQP), 755–809 (CPCP…PCHQ), 810–865 (CQCS…KCMP), 866–916 (CSCH…GCRS), 917–964 (CKCH…GCRA), and 965–1013 (CRCS…CQQC). An N-linked (GlcNAc...) asparagine glycan is attached at asparagine 837. An N-linked (GlcNAc...) asparagine glycan is attached at asparagine 980. Positions 1014–1575 (PSCYALVKEE…SLPENCASWQ (562 aa)) are domain II and I. Positions 1059–1061 (RGD) match the Cell attachment site motif. Residues 1073–1134 (REAFLEQMMS…SEEEILHAAA (62 aa)) adopt a coiled-coil conformation. Asparagine 1185 carries N-linked (GlcNAc...) asparagine glycosylation. Residues 1201-1228 (LETQRDLEDRYQEVQAAQKALRTAVAEV) are a coiled coil. The disordered stretch occupies residues 1378 to 1399 (KQAERMLGNAAPLSSSAKKKGR). Coiled coils occupy residues 1410 to 1492 (KLAK…LARL) and 1523 to 1567 (GSLQ…LHSL).

As to quaternary structure, laminin is a complex glycoprotein, consisting of three different polypeptide chains (alpha, beta, gamma), which are bound to each other by disulfide bonds into a cross-shaped molecule comprising one long and three short arms with globules at each end. Gamma-3 is a subunit of laminin-12 (laminin-213), laminin-14 (laminin-423) and laminin-15 (laminin-523). Broadly expressed in: skin, heart, lung, and the reproductive tracts.

It is found in the secreted. The protein resides in the extracellular space. It localises to the extracellular matrix. Its subcellular location is the basement membrane. Functionally, binding to cells via a high affinity receptor, laminin is thought to mediate the attachment, migration and organization of cells into tissues during embryonic development by interacting with other extracellular matrix components. The sequence is that of Laminin subunit gamma-3 (LAMC3) from Homo sapiens (Human).